The following is a 359-amino-acid chain: tRNA-specific 2-thiouridylase MnmA (359 aa).

Residues 9–16 (GMSGGVDS) and Met35 each bind ATP. The active-site Nucleophile is the Cys105. A disulfide bridge links Cys105 with Cys203. Residue Gly129 participates in ATP binding. Residues 153–155 (KDQ) are interaction with tRNA. Catalysis depends on Cys203, which acts as the Cysteine persulfide intermediate. The interval 309–310 (RY) is interaction with tRNA.

This sequence belongs to the MnmA/TRMU family.

It is found in the cytoplasm. It catalyses the reaction S-sulfanyl-L-cysteinyl-[protein] + uridine(34) in tRNA + AH2 + ATP = 2-thiouridine(34) in tRNA + L-cysteinyl-[protein] + A + AMP + diphosphate + H(+). Its function is as follows. Catalyzes the 2-thiolation of uridine at the wobble position (U34) of tRNA, leading to the formation of s(2)U34. This Acetivibrio thermocellus (strain ATCC 27405 / DSM 1237 / JCM 9322 / NBRC 103400 / NCIMB 10682 / NRRL B-4536 / VPI 7372) (Clostridium thermocellum) protein is tRNA-specific 2-thiouridylase MnmA.